We begin with the raw amino-acid sequence, 1047 residues long: Rab11 family-interacting protein 3 (1047 aa).

Disordered regions lie at residues 1–107 (MELC…WPQE), 311–335 (SHSC…DVSH), and 475–496 (PGPP…TAQE). Residues 64-73 (EPHAPSRWAK) are compositionally biased toward basic and acidic residues. EF-hand domains are found at residues 496–531 (EEGA…YGAE) and 528–563 (YGAE…IRNG). Ca(2+)-binding residues include Asp-509, Asp-511, Asp-513, Asp-520, Asp-541, Ser-543, and Asp-552. 3 positions are modified to phosphoserine: Ser-641, Ser-765, and Ser-829. Residues 750–985 (EEDIADKVIF…NGQIITLSIQ (236 aa)) are a coiled coil. Residues 775–879 (GEQHGRLRQE…MLDEIEELTQ (105 aa)) are ARF-binding domain (ABD). The tract at residues 882 to 906 (SEEQENKRKMGDRLSHERHQFQRDK) is disordered. 2 positions are modified to phosphoserine: Ser-938 and Ser-939. One can recognise an FIP-RBD domain in the interval 985–1047 (QGAKSLFSTS…ETNPSILEVK (63 aa)).

In terms of assembly, homodimer. Interacts with RAB11A; the interaction is direct and is required for the recruitment to endosomes. Interacts with RAB11B. Forms a ternary complex with RAB11A and dynein intermediate chain DYNC1LI1; RAB11FIP3 links RAB11A to dynein and the interaction regulates endocytic trafficking. Interacts with dynein intermediate chain and dynactin (DCTN1); the interaction activates dynein processivity. Interacts with ARF6 and EXOC7; the interaction serves for recruitment and tethering of recycling endosomes-derived vesicles to the cleavage furrow/midbody. Interacts with RACGAP1/MgcRacGAP; the interaction occurs at late telophase and is required for recruitment and tethering of recycling endosomes-derived vesicles to the cleavage furrow/midbody. Forms a complex with RAB11A and Rabin8/RAB3IP, probably a heterohexamer with two of each protein subunit, where RAB3IP and RAB11FIP3 simultaneously bind to RAB11A; the complex promotes preciliary trafficking. Forms a complex containing RAB11A, ASAP1, RAB3IP, RAP11FIP3 and ARF4; the complex promotes preciliary trafficking; the complex binds to RHO in photoreceptor cells and promotes RHO ciliary transport. Interacts with RAB11FIP4. Interacts with RAB25.

The protein resides in the recycling endosome membrane. It is found in the cytoplasm. The protein localises to the cytoskeleton. Its subcellular location is the microtubule organizing center. It localises to the centrosome. The protein resides in the cleavage furrow. It is found in the midbody. The protein localises to the golgi apparatus membrane. Its subcellular location is the golgi apparatus. It localises to the trans-Golgi network membrane. Functionally, downstream effector molecule for Rab11 GTPase which is involved in endocytic trafficking, cytokinesis and intracellular ciliogenesis by participating in membrane delivery. Recruited by Rab11 to endosomes where it links Rab11 to dynein motor complex. The functional Rab11-RAB11FIP3-dynein complex regulates the movement of peripheral sorting endosomes (SE) along microtubule tracks toward the microtubule organizing center/centrosome, generating the endocytic recycling compartment (ERC) during interphase of cell cycle. Facilitates the interaction between dynein and dynactin and activates dynein processivity. Binding with ASAP1 is needed to regulate the pericentrosomal localization of recycling endosomes. The Rab11-RAB11FIP3 complex is also implicated in the transport during telophase of vesicles derived from recycling endosomes to the cleavage furrow via centrosome-anchored microtubules, where the vesicles function to deliver membrane during late cytokinesis and abscission. The recruitment of Rab11-RAB11FIP3-containing endosomes to the cleavage furrow and tethering to the midbody is co-mediated by RAB11FIP3 interaction with ARF6-exocyst and RACGAP1-MKLP1 tethering complexes. Also involved in the Rab11-Rabin8-Rab8 ciliogenesis cascade by facilitating the orderly assembly of a ciliary targeting complex containing Rab11, ASAP1, Rabin8/RAB3IP, RAB11FIP3 and ARF4, which directs preciliary vesicle trafficking to mother centriole and ciliogenesis initiation. Also promotes the activity of Rab11 and ASAP1 in the ARF4-dependent Golgi-to-cilia transport of the sensory receptor rhodopsin. Competes with WDR44 for binding to Rab11, which controls intracellular ciliogenesis pathway. May play a role in breast cancer cell motility by regulating actin cytoskeleton. In Mus musculus (Mouse), this protein is Rab11 family-interacting protein 3.